A 265-amino-acid chain; its full sequence is Mlc titration factor A (265 aa).

Positions 111, 148, 152, and 211 each coordinate Zn(2+).

Belongs to the MtfA family. In terms of assembly, interacts with Mlc. Requires Zn(2+) as cofactor.

The protein resides in the cytoplasm. Its function is as follows. Involved in the modulation of the activity of the glucose-phosphotransferase system (glucose-PTS). Interacts with the transcriptional repressor Mlc, preventing its interaction with DNA and leading to the modulation of expression of genes regulated by Mlc, including ptsG, which encodes the PTS system glucose-specific EIICB component. Shows zinc-dependent metallopeptidase activity. This chain is Mlc titration factor A, found in Salmonella gallinarum (strain 287/91 / NCTC 13346).